The primary structure comprises 444 residues: Phosphoglucosamine mutase (444 aa).

Ser-101 functions as the Phosphoserine intermediate in the catalytic mechanism. Mg(2+) is bound by residues Ser-101, Asp-240, Asp-242, and Asp-244. Position 101 is a phosphoserine (Ser-101).

Belongs to the phosphohexose mutase family. Mg(2+) is required as a cofactor. In terms of processing, activated by phosphorylation.

The enzyme catalyses alpha-D-glucosamine 1-phosphate = D-glucosamine 6-phosphate. Functionally, catalyzes the conversion of glucosamine-6-phosphate to glucosamine-1-phosphate. The protein is Phosphoglucosamine mutase of Aeromonas hydrophila subsp. hydrophila (strain ATCC 7966 / DSM 30187 / BCRC 13018 / CCUG 14551 / JCM 1027 / KCTC 2358 / NCIMB 9240 / NCTC 8049).